Consider the following 856-residue polypeptide: Protein translocase subunit SecA (856 aa).

ATP-binding positions include Gln-77, 95-99, and Asp-534; that span reads GEGKT.

It belongs to the SecA family. Monomer and homodimer. Part of the essential Sec protein translocation apparatus which comprises SecA, SecYEG and auxiliary proteins SecDF. Other proteins may also be involved.

It is found in the cell inner membrane. It localises to the cytoplasm. The catalysed reaction is ATP + H2O + cellular proteinSide 1 = ADP + phosphate + cellular proteinSide 2.. In terms of biological role, part of the Sec protein translocase complex. Interacts with the SecYEG preprotein conducting channel. Has a central role in coupling the hydrolysis of ATP to the transfer of proteins into and across the cell membrane, serving as an ATP-driven molecular motor driving the stepwise translocation of polypeptide chains across the membrane. This is Protein translocase subunit SecA from Thermosipho africanus (strain TCF52B).